We begin with the raw amino-acid sequence, 180 residues long: GTP cyclohydrolase 1 (180 aa).

The Zn(2+) site is built by Cys71, His74, and Cys142.

Belongs to the GTP cyclohydrolase I family. As to quaternary structure, toroid-shaped homodecamer, composed of two pentamers of five dimers.

The enzyme catalyses GTP + H2O = 7,8-dihydroneopterin 3'-triphosphate + formate + H(+). It functions in the pathway cofactor biosynthesis; 7,8-dihydroneopterin triphosphate biosynthesis; 7,8-dihydroneopterin triphosphate from GTP: step 1/1. The chain is GTP cyclohydrolase 1 (folE) from Helicobacter pylori (strain ATCC 700392 / 26695) (Campylobacter pylori).